The chain runs to 181 residues: ATP-dependent protease subunit ClpQ (181 aa).

Residue S2 is part of the active site. Na(+)-binding residues include G165, C168, and T171.

The protein belongs to the peptidase T1B family. HslV subfamily. As to quaternary structure, a double ring-shaped homohexamer of ClpQ is capped on each side by a ring-shaped ClpY homohexamer. The assembly of the ClpQ/ClpY complex is dependent on binding of ATP.

It is found in the cytoplasm. Functionally, protease subunit of a proteasome-like degradation complex. The polypeptide is ATP-dependent protease subunit ClpQ (clpQ) (Bacillus licheniformis (strain ATCC 14580 / DSM 13 / JCM 2505 / CCUG 7422 / NBRC 12200 / NCIMB 9375 / NCTC 10341 / NRRL NRS-1264 / Gibson 46)).